Reading from the N-terminus, the 371-residue chain is Chaperone protein DnaJ (371 aa).

A J domain is found at 5-69 (DYYEVLGLSK…QKRAQYDQFG (65 aa)). Residues 133–215 (GKELNVEIPV…CHGSGKVRKR (83 aa)) form a CR-type zinc finger. Zn(2+)-binding residues include Cys-146, Cys-149, Cys-163, Cys-166, Cys-189, Cys-192, Cys-203, and Cys-206. 4 CXXCXGXG motif repeats span residues 146-153 (CDTCKGSG), 163-170 (CKHCSGSG), 189-196 (CSHCSGTG), and 203-210 (CTTCHGSG).

It belongs to the DnaJ family. Homodimer. Zn(2+) is required as a cofactor.

It localises to the cytoplasm. Functionally, participates actively in the response to hyperosmotic and heat shock by preventing the aggregation of stress-denatured proteins and by disaggregating proteins, also in an autonomous, DnaK-independent fashion. Unfolded proteins bind initially to DnaJ; upon interaction with the DnaJ-bound protein, DnaK hydrolyzes its bound ATP, resulting in the formation of a stable complex. GrpE releases ADP from DnaK; ATP binding to DnaK triggers the release of the substrate protein, thus completing the reaction cycle. Several rounds of ATP-dependent interactions between DnaJ, DnaK and GrpE are required for fully efficient folding. Also involved, together with DnaK and GrpE, in the DNA replication of plasmids through activation of initiation proteins. The sequence is that of Chaperone protein DnaJ from Bacillus cereus (strain AH820).